A 303-amino-acid chain; its full sequence is MISTERLTHLKQLEAESIHIIREVVAEFSNPVMMYSVGKDSAVMLHLALKAFAPAKLPFPLLHVDTLWKFKEMIAFRDQRAKEEGFELLVHTNPEGVAMNISPFTHGSAVHTDIMKTQGLKQALNKYKFDAVFGGARRDEEKSRAKERIYSFRDKNHRWDPKNQRPELWNIYNGRVHKDESIRVFPISNWTELDIWQYIYLEQIPIVPLYFAAKRPVLEKDGVKIMVDDDRMPIGPDDVIKEEMVRFRTLGCYPLTGAVDSTATTLPEIIQEMLLTKTSERQGRVIDNDSAGSMEKKKIEGYF.

This sequence belongs to the PAPS reductase family. CysD subfamily. In terms of assembly, heterodimer composed of CysD, the smaller subunit, and CysN.

The catalysed reaction is sulfate + ATP + H(+) = adenosine 5'-phosphosulfate + diphosphate. It functions in the pathway sulfur metabolism; hydrogen sulfide biosynthesis; sulfite from sulfate: step 1/3. With CysN forms the ATP sulfurylase (ATPS) that catalyzes the adenylation of sulfate producing adenosine 5'-phosphosulfate (APS) and diphosphate, the first enzymatic step in sulfur assimilation pathway. APS synthesis involves the formation of a high-energy phosphoric-sulfuric acid anhydride bond driven by GTP hydrolysis by CysN coupled to ATP hydrolysis by CysD. This Aliarcobacter butzleri (strain RM4018) (Arcobacter butzleri) protein is Sulfate adenylyltransferase subunit 2.